Consider the following 207-residue polypeptide: ATP synthase subunit 5, mitochondrial (207 aa).

The protein belongs to the ATPase delta chain family. In terms of assembly, F-type ATPases have 2 components, CF(1) - the catalytic core - and CF(0) - the membrane proton channel. CF(1) has five subunits: alpha(3), beta(3), gamma(1), delta(1), epsilon(1). CF(0) has three main subunits: a, b and c.

The protein resides in the mitochondrion. Its subcellular location is the mitochondrion inner membrane. Its function is as follows. Mitochondrial membrane ATP synthase (F(1)F(0) ATP synthase or Complex V) produces ATP from ADP in the presence of a proton gradient across the membrane which is generated by electron transport complexes of the respiratory chain. F-type ATPases consist of two structural domains, F(1) - containing the extramembraneous catalytic core and F(0) - containing the membrane proton channel, linked together by a central stalk and a peripheral stalk. During catalysis, ATP synthesis in the catalytic domain of F(1) is coupled via a rotary mechanism of the central stalk subunits to proton translocation. Part of the complex F(0) domain and the peripheric stalk, which acts as a stator to hold the catalytic alpha(3)beta(3) subcomplex and subunit a/ATP6 static relative to the rotary elements. The sequence is that of ATP synthase subunit 5, mitochondrial (ATP5) from Eremothecium gossypii (strain ATCC 10895 / CBS 109.51 / FGSC 9923 / NRRL Y-1056) (Yeast).